The following is a 257-amino-acid chain: NAD kinase (257 aa).

Residue aspartate 46 is the Proton acceptor of the active site. NAD(+) is bound by residues 46–47, 116–117, aspartate 146, alanine 154, 157–162, and asparagine 218; these read DG, NE, and TAYNLS.

The protein belongs to the NAD kinase family. Requires a divalent metal cation as cofactor.

The protein localises to the cytoplasm. The catalysed reaction is NAD(+) + ATP = ADP + NADP(+) + H(+). Its function is as follows. Involved in the regulation of the intracellular balance of NAD and NADP, and is a key enzyme in the biosynthesis of NADP. Catalyzes specifically the phosphorylation on 2'-hydroxyl of the adenosine moiety of NAD to yield NADP. The polypeptide is NAD kinase (Brucella melitensis biotype 1 (strain ATCC 23456 / CCUG 17765 / NCTC 10094 / 16M)).